The following is a 569-amino-acid chain: Serine/threonine-protein kinase gad8 (569 aa).

The segment at Gly19–Val63 is disordered. Over residues Leu31–Arg42 the composition is skewed to low complexity. A compositionally biased stretch (basic and acidic residues) spans Lys43 to Ser58. One can recognise a C2 domain in the interval Ser45–Val202. Residues Phe230 to Phe485 enclose the Protein kinase domain. ATP contacts are provided by residues Val236 to Val244 and Lys259. Catalysis depends on Asp353, which acts as the Proton acceptor. Thr387 is modified (phosphothreonine; by ksg1). Residues Asp486–Asp557 enclose the AGC-kinase C-terminal domain. Residues Ser527 and Ser546 each carry the phosphoserine; by TORC2 modification.

The protein belongs to the protein kinase superfamily. AGC Ser/Thr protein kinase family. Phosphorylated by ksg1 and target of rapamycin complex 2 (TORC2), affecting the kinase activity of gad8 in a nutrient-dependent manner.

It catalyses the reaction L-seryl-[protein] + ATP = O-phospho-L-seryl-[protein] + ADP + H(+). The catalysed reaction is L-threonyl-[protein] + ATP = O-phospho-L-threonyl-[protein] + ADP + H(+). Its function is as follows. Involved in a signaling module for sexual development and cell growth under stressed conditions. Required for G1 arrest under nitrogen starvation and for growth at high temperature and osmolarity. The polypeptide is Serine/threonine-protein kinase gad8 (Schizosaccharomyces pombe (strain 972 / ATCC 24843) (Fission yeast)).